The chain runs to 151 residues: Inorganic triphosphatase (151 aa).

A CYTH domain is found at 1 to 148; it reads MTEIERKFLV…KRYKNKALAL (148 aa). Tyr27 serves as the catalytic Proton acceptor.

As to quaternary structure, homodimer.

It carries out the reaction triphosphate + H2O = phosphate + diphosphate. Activated by magnesium and mangenese ions, and inhibited by calcium, zinc and copper ions. Involved in the hydrolysis of the beta-gamma-phosphoanhydride linkage of triphosphate-containing substrates (inorganic or nucleoside-linked). Catalyzes the hydrolysis of inorganic triphosphate (PPPi). The enzyme has a strong preference for linear PPPi compared with cyclic PPPi (cyclic trimetaphosphate) and to the linear P4. The longer chains polyphosphate are not hydrolyzed. It has only a slight thiamine triphosphatase (ThTPase) activity. Nucleoside triphosphatase activity is negligible in the presence of magnesium, but a small activity is observed in the presence of manganese, in particular with GTP. This Nitrosomonas europaea (strain ATCC 19718 / CIP 103999 / KCTC 2705 / NBRC 14298) protein is Inorganic triphosphatase.